Reading from the N-terminus, the 120-residue chain is Nitrogenase-stabilizing/protective protein NifW (120 aa).

This sequence belongs to the NifW family. Homotrimer; associates with NifD.

May protect the nitrogenase Fe-Mo protein from oxidative damage. In Rhodospirillum rubrum (strain ATCC 11170 / ATH 1.1.1 / DSM 467 / LMG 4362 / NCIMB 8255 / S1), this protein is Nitrogenase-stabilizing/protective protein NifW.